The following is a 157-amino-acid chain: Putative 4-hydroxy-4-methyl-2-oxoglutarate aldolase (157 aa).

Substrate is bound by residues 78-81 and arginine 100; that span reads GDVI. Aspartate 101 serves as a coordination point for a divalent metal cation.

This sequence belongs to the class II aldolase/RraA-like family. In terms of assembly, homotrimer. Requires a divalent metal cation as cofactor.

The catalysed reaction is 4-hydroxy-4-methyl-2-oxoglutarate = 2 pyruvate. It catalyses the reaction oxaloacetate + H(+) = pyruvate + CO2. Functionally, catalyzes the aldol cleavage of 4-hydroxy-4-methyl-2-oxoglutarate (HMG) into 2 molecules of pyruvate. Also contains a secondary oxaloacetate (OAA) decarboxylase activity due to the common pyruvate enolate transition state formed following C-C bond cleavage in the retro-aldol and decarboxylation reactions. This is Putative 4-hydroxy-4-methyl-2-oxoglutarate aldolase from Mycobacterium leprae (strain Br4923).